The chain runs to 120 residues: Large ribosomal subunit protein uL18 (120 aa).

It belongs to the universal ribosomal protein uL18 family. As to quaternary structure, part of the 50S ribosomal subunit; part of the 5S rRNA/L5/L18/L25 subcomplex. Contacts the 5S and 23S rRNAs.

Its function is as follows. This is one of the proteins that bind and probably mediate the attachment of the 5S RNA into the large ribosomal subunit, where it forms part of the central protuberance. The chain is Large ribosomal subunit protein uL18 from Xanthobacter autotrophicus (strain ATCC BAA-1158 / Py2).